Reading from the N-terminus, the 370-residue chain is Putative agmatine deiminase (370 aa).

Catalysis depends on cysteine 361, which acts as the Amidino-cysteine intermediate.

Belongs to the agmatine deiminase family.

The enzyme catalyses agmatine + H2O = N-carbamoylputrescine + NH4(+). This chain is Putative agmatine deiminase, found in Shewanella baltica (strain OS155 / ATCC BAA-1091).